We begin with the raw amino-acid sequence, 458 residues long: Argininosuccinate lyase (458 aa).

The protein belongs to the lyase 1 family. Argininosuccinate lyase subfamily.

It is found in the cytoplasm. It catalyses the reaction 2-(N(omega)-L-arginino)succinate = fumarate + L-arginine. It functions in the pathway amino-acid biosynthesis; L-arginine biosynthesis; L-arginine from L-ornithine and carbamoyl phosphate: step 3/3. This chain is Argininosuccinate lyase, found in Salmonella newport (strain SL254).